A 420-amino-acid polypeptide reads, in one-letter code: Lactosylceramide alpha-2,3-sialyltransferase (420 aa).

Residues 1-39 (MRKKAAGGAERRPLKPRTEAAAAAPAGRAMPSDHSRMKL) form a disordered region. The Cytoplasmic segment spans residues 1–67 (MRKKAAGGAE…MRRPNLLLKD (67 aa)). Basic and acidic residues predominate over residues 9 to 18 (AERRPLKPRT). The span at 20-29 (AAAAAPAGRA) shows a compositional bias: low complexity. Residues 68–88 (ILKCTLLLFGVWILFYILKLN) form a helical membrane-spanning segment. Over 89–420 (HTTEECDMKR…DLSGGIHSEF (332 aa)) the chain is Lumenal. Cysteines 197 and 355 form a disulfide. N-linked (GlcNAc...) asparagine glycosylation is present at Asn-238.

The protein belongs to the glycosyltransferase 29 family.

The protein resides in the golgi apparatus membrane. It catalyses the reaction a beta-D-Gal-(1-&gt;4)-beta-D-Glc-(1&lt;-&gt;1)-Cer(d18:1(4E)) + CMP-N-acetyl-beta-neuraminate = a ganglioside GM3 (d18:1(4E)) + CMP + H(+). The enzyme catalyses ganglioside GA2 (d18:1(4E)/18:0) + CMP-N-acetyl-beta-neuraminate = ganglioside GM2 (d18:1(4E)/18:0) + CMP + H(+). It carries out the reaction a beta-D-Gal-(1&lt;-&gt;1')-ceramide + CMP-N-acetyl-beta-neuraminate = N-acetyl-alpha-neuraminosyl-(2-&gt;3)-beta-D-galactosyl-(1&lt;-&gt;1')-ceramide + CMP + H(+). The catalysed reaction is ganglioside GA1 (d18:1(4E)/18:0) + CMP-N-acetyl-beta-neuraminate = ganglioside GM1 (d18:1(4E)/18:0) + CMP + H(+). In terms of biological role, transfers the sialyl group (N-acetyl-alpha-neuraminyl or NeuAc) from CMP-NeuAc to the non-reducing terminal galactose (Gal) of glycosphingolipids forming gangliosides (important molecules involved in the regulation of multiple cellular processes, including cell proliferation and differentiation, apoptosis, embryogenesis, development, and oncogenesis). Mainly involved in the biosynthesis of ganglioside GM3 but can also use different glycolipids as substrate acceptors such as D-galactosylceramide (GalCer), asialo-GM2 (GA2) and asialo-GM1 (GA1), although less preferentially than beta-D-Gal-(1-&gt;4)-beta-D-Glc-(1&lt;-&gt;1)-Cer (LacCer). This is Lactosylceramide alpha-2,3-sialyltransferase (ST3GAL5) from Bos taurus (Bovine).